The chain runs to 287 residues: 5'-3' exonuclease (287 aa).

A 5'-3' exonuclease domain is found at 172-270 (IYPKEFIDLL…ITSEEITLKK (99 aa)).

In terms of biological role, 5'-3' exonuclease acting preferentially on double-stranded DNA. This is 5'-3' exonuclease (pol) from Buchnera aphidicola subsp. Schizaphis graminum (strain Sg).